The primary structure comprises 336 residues: UDP-3-O-acylglucosamine N-acyltransferase (336 aa).

His236 acts as the Proton acceptor in catalysis.

It belongs to the transferase hexapeptide repeat family. LpxD subfamily. Homotrimer.

It carries out the reaction a UDP-3-O-[(3R)-3-hydroxyacyl]-alpha-D-glucosamine + a (3R)-hydroxyacyl-[ACP] = a UDP-2-N,3-O-bis[(3R)-3-hydroxyacyl]-alpha-D-glucosamine + holo-[ACP] + H(+). Its pathway is bacterial outer membrane biogenesis; LPS lipid A biosynthesis. In terms of biological role, catalyzes the N-acylation of UDP-3-O-acylglucosamine using 3-hydroxyacyl-ACP as the acyl donor. Is involved in the biosynthesis of lipid A, a phosphorylated glycolipid that anchors the lipopolysaccharide to the outer membrane of the cell. The chain is UDP-3-O-acylglucosamine N-acyltransferase from Aromatoleum aromaticum (strain DSM 19018 / LMG 30748 / EbN1) (Azoarcus sp. (strain EbN1)).